A 224-amino-acid chain; its full sequence is LexA repressor (224 aa).

The segment at residues 31 to 51 (RAEIANTLGFKSANAAEEHLQ) is a DNA-binding region (H-T-H motif). Active-site for autocatalytic cleavage activity residues include S142 and K179.

The protein belongs to the peptidase S24 family. In terms of assembly, homodimer.

The enzyme catalyses Hydrolysis of Ala-|-Gly bond in repressor LexA.. In terms of biological role, represses a number of genes involved in the response to DNA damage (SOS response), including recA and lexA. In the presence of single-stranded DNA, RecA interacts with LexA causing an autocatalytic cleavage which disrupts the DNA-binding part of LexA, leading to derepression of the SOS regulon and eventually DNA repair. This Delftia acidovorans (strain DSM 14801 / SPH-1) protein is LexA repressor.